We begin with the raw amino-acid sequence, 584 residues long: Proline--tRNA ligase (584 aa).

A disordered region spans residues 242–261; it reads APPASNPEERPATQVHDTPD.

This sequence belongs to the class-II aminoacyl-tRNA synthetase family. ProS type 1 subfamily. Homodimer.

It is found in the cytoplasm. It catalyses the reaction tRNA(Pro) + L-proline + ATP = L-prolyl-tRNA(Pro) + AMP + diphosphate. In terms of biological role, catalyzes the attachment of proline to tRNA(Pro) in a two-step reaction: proline is first activated by ATP to form Pro-AMP and then transferred to the acceptor end of tRNA(Pro). As ProRS can inadvertently accommodate and process non-cognate amino acids such as alanine and cysteine, to avoid such errors it has two additional distinct editing activities against alanine. One activity is designated as 'pretransfer' editing and involves the tRNA(Pro)-independent hydrolysis of activated Ala-AMP. The other activity is designated 'posttransfer' editing and involves deacylation of mischarged Ala-tRNA(Pro). The misacylated Cys-tRNA(Pro) is not edited by ProRS. In Salinispora arenicola (strain CNS-205), this protein is Proline--tRNA ligase.